The chain runs to 503 residues: Type II secretion system ATPase E (503 aa).

Positions 397, 400, 430, and 433 each coordinate Zn(2+).

Belongs to the GSP E family. As to quaternary structure, forms homooligomers; most probably hexamers. Interacts with EpsL/GspL. The cofactor is Zn(2+).

It is found in the cell inner membrane. It catalyses the reaction ATP + H2O + cellular proteinSide 1 = ADP + phosphate + cellular proteinSide 2.. Its function is as follows. ATPase component of the type II secretion system required for the energy-dependent secretion of extracellular factors such as proteases and toxins from the periplasm. Acts as a molecular motor to provide the energy that is required for assembly of the pseudopilus and the extrusion of substrates generated in the cytoplasm. The chain is Type II secretion system ATPase E (epsE) from Vibrio cholerae serotype O1 (strain ATCC 39315 / El Tor Inaba N16961).